The sequence spans 88 residues: Elongation factor 1-beta (88 aa).

This sequence belongs to the EF-1-beta/EF-1-delta family.

Promotes the exchange of GDP for GTP in EF-1-alpha/GDP, thus allowing the regeneration of EF-1-alpha/GTP that could then be used to form the ternary complex EF-1-alpha/GTP/AAtRNA. This Archaeoglobus fulgidus (strain ATCC 49558 / DSM 4304 / JCM 9628 / NBRC 100126 / VC-16) protein is Elongation factor 1-beta (ef1b).